Reading from the N-terminus, the 46-residue chain is MNKMNGTNDEKHFNHFVIALSFIYGLTELGYLLLKDFITIAISLPL.

A helical transmembrane segment spans residues 12–34; that stretch reads HFNHFVIALSFIYGLTELGYLLL.

Its subcellular location is the cell membrane. This is an uncharacterized protein from Bacillus subtilis (strain 168).